Consider the following 190-residue polypeptide: Inosine triphosphate pyrophosphatase (190 aa).

10–15 contributes to the ITP binding site; that stretch reads TGNAKK. Glu-40 serves as a coordination point for Mg(2+). ITP-binding positions include Lys-52, 68 to 69, Lys-85, 144 to 147, Lys-167, and 172 to 173; these read DT, FGWD, and HR.

This sequence belongs to the HAM1 NTPase family. Homodimer. Requires Mg(2+) as cofactor. Mn(2+) serves as cofactor.

The protein localises to the cytoplasm. It catalyses the reaction ITP + H2O = IMP + diphosphate + H(+). It carries out the reaction dITP + H2O = dIMP + diphosphate + H(+). The enzyme catalyses XTP + H2O = XMP + diphosphate + H(+). In terms of biological role, pyrophosphatase that hydrolyzes non-canonical purine nucleotides such as inosine triphosphate (ITP), deoxyinosine triphosphate (dITP) or xanthosine 5'-triphosphate (XTP) to their respective monophosphate derivatives. The enzyme does not distinguish between the deoxy- and ribose forms. Probably excludes non-canonical purines from RNA and DNA precursor pools, thus preventing their incorporation into RNA and DNA and avoiding chromosomal lesions. The sequence is that of Inosine triphosphate pyrophosphatase from Culex quinquefasciatus (Southern house mosquito).